A 156-amino-acid chain; its full sequence is Succinate dehydrogenase assembly factor 2-B, mitochondrial (156 aa).

A mitochondrion-targeting transit peptide spans 1 to 24; the sequence is MLRQLIVSTVGRRMPLQMISQSRL.

The protein belongs to the SDHAF2 family. In terms of assembly, interacts with the flavoprotein subunit within the SDH catalytic dimer.

It localises to the mitochondrion matrix. In terms of biological role, plays an essential role in the assembly of succinate dehydrogenase (SDH), an enzyme complex (also referred to as respiratory complex II) that is a component of both the tricarboxylic acid (TCA) cycle and the mitochondrial electron transport chain, and which couples the oxidation of succinate to fumarate with the reduction of ubiquinone (coenzyme Q) to ubiquinol. Required for flavinylation (covalent attachment of FAD) of the flavoprotein subunit of the SDH catalytic dimer. The sequence is that of Succinate dehydrogenase assembly factor 2-B, mitochondrial from Drosophila erecta (Fruit fly).